The sequence spans 520 residues: Laccase-2 (520 aa).

The signal sequence occupies residues M1 to A19. Plastocyanin-like domains follow at residues T21–Y145, V157–A305, and T375–A488. Positions 82 and 84 each coordinate Cu cation. 2 cysteine pairs are disulfide-bonded: C103–C509 and C135–C229. N108 carries an N-linked (GlcNAc...) asparagine glycan. Residues H127 and H129 each coordinate Cu cation. N-linked (GlcNAc...) asparagine glycosylation is found at N241 and N299. Cu cation-binding residues include H417, H420, H422, H470, C471, H472, and H476. The N-linked (GlcNAc...) asparagine glycan is linked to N492.

Belongs to the multicopper oxidase family. Requires Cu cation as cofactor.

Its subcellular location is the secreted. It carries out the reaction 4 hydroquinone + O2 = 4 benzosemiquinone + 2 H2O. In terms of biological role, lignin degradation and detoxification of lignin-derived products. In Agaricus bisporus (White button mushroom), this protein is Laccase-2 (lcc2).